The primary structure comprises 103 residues: UPF0145 protein PERMA_0324 (103 aa).

This sequence belongs to the UPF0145 family.

The sequence is that of UPF0145 protein PERMA_0324 from Persephonella marina (strain DSM 14350 / EX-H1).